Reading from the N-terminus, the 488-residue chain is Erythromycin resistance ATP-binding protein MsrA (488 aa).

In terms of domain architecture, ABC transporter 1 spans 6-199 (IKFNQINHKL…NQYEQEQLEQ (194 aa)). 38–45 (GGNGTGKT) is a binding site for ATP. The tract at residues 200 to 298 (QRKYEQYISE…KIYDIHNNYP (99 aa)) is Q-linker, rich in Glu and hydrophilic AA. The interval 211-255 (QRLSQASKAKRNQAQQMAQASSKQKNKSIAPDRLSASKEKGTVEK) is disordered. Positions 222 to 233 (NQAQQMAQASSK) are enriched in low complexity. Residues 245 to 255 (SASKEKGTVEK) show a composition bias toward basic and acidic residues. Residues 299 to 487 (IIAQNLTLVK…ELTGQSIHDI (189 aa)) enclose the ABC transporter 2 domain. 331-338 (GANGVGKT) serves as a coordination point for ATP.

The protein belongs to the ABC transporter superfamily.

Confers resistance to 14-membered ring macrolides (like erythromycin) and to B streptogramins, by acting as an ATP-dependent efflux pump. The polypeptide is Erythromycin resistance ATP-binding protein MsrA (msrA) (Staphylococcus epidermidis).